We begin with the raw amino-acid sequence, 756 residues long: Nucleomorphin (756 aa).

Positions M1 to S10 are enriched in polar residues. The interval M1–S113 is disordered. 2 stretches are compositionally biased toward low complexity: residues N16–S66 and N75–N94. Polar residues predominate over residues G95–S113. Positions L124–V216 constitute a BRCT domain. 4 disordered regions span residues N229–Q251, P272–E298, K359–N403, and T422–L463. Composition is skewed to low complexity over residues L285–E298, N364–K401, and T422–S432. Positions K448–H459 are enriched in basic residues. The Nuclear localization signal motif lies at K464–K480. Residues A495–K512 are calmodulin binding. Residues S514–I529 are compositionally biased toward polar residues. The disordered stretch occupies residues S514–E587. The span at Y536 to E587 shows a compositional bias: acidic residues. The tract at residues D537–D588 is DEED region. Calmodulin binding stretches follow at residues V589–K606 and K596–H613. Disordered stretches follow at residues H613 to R639 and L660 to I700. Residues L668–T691 are compositionally biased toward polar residues.

Interacts with calmodulin and CBPD1 in the presence of Ca(2+).

The protein resides in the nucleus. This chain is Nucleomorphin (numA), found in Dictyostelium discoideum (Social amoeba).